A 324-amino-acid polypeptide reads, in one-letter code: Acetyl-coenzyme A carboxylase carboxyl transferase subunit alpha (324 aa).

In terms of domain architecture, CoA carboxyltransferase C-terminal spans 42–296 (RLSELEEEVY…EKALTRLAEK (255 aa)).

It belongs to the AccA family. As to quaternary structure, acetyl-CoA carboxylase is a heterohexamer composed of biotin carboxyl carrier protein (AccB), biotin carboxylase (AccC) and two subunits each of ACCase subunit alpha (AccA) and ACCase subunit beta (AccD).

It is found in the cytoplasm. The enzyme catalyses N(6)-carboxybiotinyl-L-lysyl-[protein] + acetyl-CoA = N(6)-biotinyl-L-lysyl-[protein] + malonyl-CoA. It participates in lipid metabolism; malonyl-CoA biosynthesis; malonyl-CoA from acetyl-CoA: step 1/1. Component of the acetyl coenzyme A carboxylase (ACC) complex. First, biotin carboxylase catalyzes the carboxylation of biotin on its carrier protein (BCCP) and then the CO(2) group is transferred by the carboxyltransferase to acetyl-CoA to form malonyl-CoA. This is Acetyl-coenzyme A carboxylase carboxyl transferase subunit alpha from Shouchella clausii (strain KSM-K16) (Alkalihalobacillus clausii).